Here is a 475-residue protein sequence, read N- to C-terminus: Aspartyl/glutamyl-tRNA(Asn/Gln) amidotransferase subunit B (475 aa).

This sequence belongs to the GatB/GatE family. GatB subfamily. Heterotrimer of A, B and C subunits.

It carries out the reaction L-glutamyl-tRNA(Gln) + L-glutamine + ATP + H2O = L-glutaminyl-tRNA(Gln) + L-glutamate + ADP + phosphate + H(+). The enzyme catalyses L-aspartyl-tRNA(Asn) + L-glutamine + ATP + H2O = L-asparaginyl-tRNA(Asn) + L-glutamate + ADP + phosphate + 2 H(+). In terms of biological role, allows the formation of correctly charged Asn-tRNA(Asn) or Gln-tRNA(Gln) through the transamidation of misacylated Asp-tRNA(Asn) or Glu-tRNA(Gln) in organisms which lack either or both of asparaginyl-tRNA or glutaminyl-tRNA synthetases. The reaction takes place in the presence of glutamine and ATP through an activated phospho-Asp-tRNA(Asn) or phospho-Glu-tRNA(Gln). In Thermoanaerobacter pseudethanolicus (strain ATCC 33223 / 39E) (Clostridium thermohydrosulfuricum), this protein is Aspartyl/glutamyl-tRNA(Asn/Gln) amidotransferase subunit B.